The following is a 104-amino-acid chain: MKNFFYKGNKKIQQRMLNYGMEWAATHGKVRTFICCYTLGGTASLKLYQKAYQNEKFMIMALCSYLGNIQINNPWESLNPYTMVQNKEKFLPLKFSEETQYFYI.

This sequence belongs to the asfivirus MGF 300 family.

Functionally, plays a role in virus cell tropism, and may be required for efficient virus replication in macrophages. This is Protein MGF 300-3L from African swine fever virus (isolate Tick/Malawi/Lil 20-1/1983) (ASFV).